The sequence spans 283 residues: Light-independent protochlorophyllide reductase iron-sulfur ATP-binding protein (283 aa).

Residues 15 to 20 and Lys44 each bind ATP; that span reads GIGKST. Residue Ser19 coordinates Mg(2+). Cys100 and Cys134 together coordinate [4Fe-4S] cluster. 185–186 provides a ligand contact to ATP; sequence NR.

Belongs to the NifH/BchL/ChlL family. Homodimer. Protochlorophyllide reductase is composed of three subunits; ChlL, ChlN and ChlB. [4Fe-4S] cluster serves as cofactor.

It catalyses the reaction chlorophyllide a + oxidized 2[4Fe-4S]-[ferredoxin] + 2 ADP + 2 phosphate = protochlorophyllide a + reduced 2[4Fe-4S]-[ferredoxin] + 2 ATP + 2 H2O. It participates in porphyrin-containing compound metabolism; chlorophyll biosynthesis (light-independent). Component of the dark-operative protochlorophyllide reductase (DPOR) that uses Mg-ATP and reduced ferredoxin to reduce ring D of protochlorophyllide (Pchlide) to form chlorophyllide a (Chlide). This reaction is light-independent. The L component serves as a unique electron donor to the NB-component of the complex, and binds Mg-ATP. This Synechococcus sp. (strain JA-2-3B'a(2-13)) (Cyanobacteria bacterium Yellowstone B-Prime) protein is Light-independent protochlorophyllide reductase iron-sulfur ATP-binding protein.